A 117-amino-acid polypeptide reads, in one-letter code: Large ribosomal subunit protein bL20 (117 aa).

The protein belongs to the bacterial ribosomal protein bL20 family.

In terms of biological role, binds directly to 23S ribosomal RNA and is necessary for the in vitro assembly process of the 50S ribosomal subunit. It is not involved in the protein synthesizing functions of that subunit. In Geobacter sulfurreducens (strain ATCC 51573 / DSM 12127 / PCA), this protein is Large ribosomal subunit protein bL20.